The chain runs to 378 residues: 1-acyl-sn-glycerol-3-phosphate acyltransferase delta (378 aa).

Residues 11 to 31 (FLCHLIFCYVFIVSGLIINTI) traverse the membrane as a helical segment. The HXXXXD motif signature appears at 96–101 (HKFEID). A run of 3 helical transmembrane segments spans residues 125 to 145 (ELAY…VFCT), 307 to 327 (TLVN…RFVI), and 338 to 358 (LASF…MIGV).

This sequence belongs to the 1-acyl-sn-glycerol-3-phosphate acyltransferase family.

The protein localises to the endoplasmic reticulum membrane. It catalyses the reaction a 1-acyl-sn-glycero-3-phosphate + an acyl-CoA = a 1,2-diacyl-sn-glycero-3-phosphate + CoA. The enzyme catalyses (4Z,7Z,10Z,13Z,16Z,19Z)-docosahexaenoyl-CoA + 1-hexadecanoyl-sn-glycero-3-phosphate = 1-hexadecanoyl-2-(4Z,7Z,10Z,13Z,16Z,19Z-docosahexaenoyl)-sn-glycero-3-phosphate + CoA. It carries out the reaction 1-octadecanoyl-sn-glycero-3-phosphate + (9Z,12Z)-octadecadienoyl-CoA = 1-octadecanoyl-2-(9Z,12Z-octadecadienoyl)-sn-glycero-3-phosphate + CoA. The catalysed reaction is 1-octadecanoyl-sn-glycero-3-phosphate + (4Z,7Z,10Z,13Z,16Z,19Z)-docosahexaenoyl-CoA = 1-octadecanoyl-2-(4Z,7Z,10Z,13Z,16Z,19Z-docosahexaenoyl)-sn-glycero-3-phosphate + CoA. It catalyses the reaction (4Z,7Z,10Z,13Z,16Z,19Z)-docosahexaenoyl-CoA + 1-(9Z-octadecenoyl)-sn-glycero-3-phosphate = 1-(9Z-octadecenoyl)-2-(4Z,7Z,10Z,13Z,16Z,19Z-docosahexaenoyl)-sn-glycero-3-phosphate + CoA. It functions in the pathway phospholipid metabolism; CDP-diacylglycerol biosynthesis; CDP-diacylglycerol from sn-glycerol 3-phosphate: step 2/3. In terms of biological role, converts 1-acyl-sn-glycerol-3-phosphate (lysophosphatidic acid or LPA) into 1,2-diacyl-sn-glycerol-3-phosphate (phosphatidic acid or PA) by incorporating an acyl moiety at the sn-2 position of the glycerol backbone. Exhibits high acyl-CoA specificity for polyunsaturated fatty acyl-CoA, especially docosahexaenoyl-CoA (22:6-CoA, DHA-CoA). This Bos taurus (Bovine) protein is 1-acyl-sn-glycerol-3-phosphate acyltransferase delta (AGPAT4).